Consider the following 610-residue polypeptide: Modifier of mdg4 (610 aa).

Residues 1–160 (MADDEQFSLC…QQPRASARYK (160 aa)) are self-association. The interval 1–308 (MADDEQFSLC…EEAEYIDLPM (308 aa)) is interaction with Chi. The region spanning 32-98 (VDVSLAAEGQ…MYCGEVNVKQ (67 aa)) is the BTB domain. Disordered stretches follow at residues 115–156 (GLTD…PRAS), 219–259 (VSTN…DSTT), 311–339 (PTKS…DDTY), and 386–432 (ESSF…PKPK). A compositionally biased stretch (pro residues) spans 122–135 (APQPPQESSPPPAA). Residues 136 to 156 (PHVQQQQIPAQRVQRQQPRAS) are compositionally biased toward low complexity. Residues 222-238 (NKRSAQRSSLTPASSSA) show a composition bias toward polar residues. The residue at position 230 (serine 230) is a Phosphoserine. The span at 312 to 325 (TKSEPDYSEDHGDA) shows a compositional bias: basic and acidic residues. Residues 386–400 (ESSFVDTSGDQGNTE) are compositionally biased toward polar residues. The span at 401 to 410 (AQAATSASAT) shows a compositional bias: low complexity. Positions 422–432 (TKVEDQTPKPK) are enriched in basic and acidic residues. An FLYWCH-type zinc finger spans residues 452–512 (YASTTKGGVK…VFPYEGEHVH (61 aa)). Residues 551-610 (LEEADDKEDEDFEEFEIQEIDEIELDEPEKTPAKEEEVDPNDFREKIKRRLQKALQNKKK) are interaction with su(Hw). The segment covering 567 to 577 (IQEIDEIELDE) has biased composition (acidic residues). The disordered stretch occupies residues 567–595 (IQEIDEIELDEPEKTPAKEEEVDPNDFRE). Residues 578–595 (PEKTPAKEEEVDPNDFRE) are compositionally biased toward basic and acidic residues.

Can self-associate. Interacts with Chi. Interacts with Top2. Isoform mod2.2: Component of the gypsy chromatin insulator complex, composed of Cp190, mod(mdg4) and su(Hw). The gypsy chromatin insulator complex interacts with Topors via mod(mdg4) and su(Hw). Isoform mod2.2 interacts with Trl/GAGA and interaction with this protein may bypass the repressive effects of the su(Hw) insulator.

The protein localises to the nucleus. It localises to the chromosome. In terms of biological role, component of the gypsy chromatin insulator complex which is required for the function of the gypsy chromatin insulator and other endogenous chromatin insulators. Chromatin insulators are regulatory elements which establish independent domains of transcriptional activity within eukaryotic genomes. Insulators have two defining properties; they can block the communication between an enhancer and a promoter when placed between them and can also buffer transgenes from position effect variegation (PEV). Insulators are proposed to structure the chromatin fiber into independent domains of differing transcriptional potential by promoting the formation of distinct chromatin loops. This chromatin looping may involve the formation of insulator bodies, where homotypic interactions between individual subunits of the insulator complex could promote the clustering of widely spaced insulators at the nuclear periphery. Within the gypsy insulator complex, this protein may control the nature of the repressive effect of su(Hw): in the absence of mod(mdg4) protein, su(Hw) exerts a bidirectional silencing effect, whereas in the presence of mod(mdg4), the silencing effect is unidirectional. Isoform H is specifically required to maintain the pairing of achiasmate homologs in male meiosis I which is mediated by the rDNA repeats on the achiasmate X-Y bivalents. Isoform H also plays a role in apoptotic regulatory pathways. In Drosophila melanogaster (Fruit fly), this protein is Modifier of mdg4.